Reading from the N-terminus, the 186-residue chain is Tumor necrosis factor alpha-induced protein 8-like protein 2 (186 aa).

Belongs to the TNFAIP8 family. TNFAIP8L2 subfamily.

In terms of biological role, acts as a negative regulator of innate and adaptive immunity by maintaining immune homeostasis. Negative regulator of Toll-like receptor and T-cell receptor function. Prevents hyperresponsiveness of the immune system and maintains immune homeostasis. Inhibits jun/ap1 and NF-kappa-B activation. Promotes Fas-induced apoptosis. The protein is Tumor necrosis factor alpha-induced protein 8-like protein 2 (tnfaip8l2) of Xenopus laevis (African clawed frog).